The primary structure comprises 119 residues: MANSKRTLFLKRRLRVRNKLRKVNAGRLRLSVHRSNKNISAQLIDDVRGVTLAAASTMEKDLGVVGKNNVEAAKKVGAAIAERAKKAGVEEAYFDRGGFLFHGKVKALADAAREGGLKI.

This sequence belongs to the universal ribosomal protein uL18 family. As to quaternary structure, part of the 50S ribosomal subunit; part of the 5S rRNA/L5/L18/L25 subcomplex. Contacts the 5S and 23S rRNAs.

Functionally, this is one of the proteins that bind and probably mediate the attachment of the 5S RNA into the large ribosomal subunit, where it forms part of the central protuberance. The protein is Large ribosomal subunit protein uL18 of Ruegeria pomeroyi (strain ATCC 700808 / DSM 15171 / DSS-3) (Silicibacter pomeroyi).